The primary structure comprises 268 residues: Kynurenine formamidase (268 aa).

An HGGXW motif is present at residues 33 to 37 (HGGGW). The active-site Nucleophile is serine 107. Active-site residues include aspartate 219 and histidine 251.

Belongs to the kynurenine formamidase family. In terms of assembly, homodimer.

The catalysed reaction is N-formyl-L-kynurenine + H2O = L-kynurenine + formate + H(+). The protein operates within amino-acid degradation; L-tryptophan degradation via kynurenine pathway; L-kynurenine from L-tryptophan: step 2/2. Catalyzes the hydrolysis of N-formyl-L-kynurenine to L-kynurenine, the second step in the kynurenine pathway of tryptophan degradation. Kynurenine may be further oxidized to nicotinic acid, NAD(H) and NADP(H). Required for elimination of toxic metabolites. This is Kynurenine formamidase from Scheffersomyces stipitis (strain ATCC 58785 / CBS 6054 / NBRC 10063 / NRRL Y-11545) (Yeast).